We begin with the raw amino-acid sequence, 342 residues long: Ferrochelatase (342 aa).

The Fe cation site is built by His188 and Glu268.

It belongs to the ferrochelatase family.

The protein localises to the cytoplasm. The catalysed reaction is heme b + 2 H(+) = protoporphyrin IX + Fe(2+). The protein operates within porphyrin-containing compound metabolism; protoheme biosynthesis; protoheme from protoporphyrin-IX: step 1/1. In terms of biological role, catalyzes the ferrous insertion into protoporphyrin IX. The chain is Ferrochelatase from Rickettsia typhi (strain ATCC VR-144 / Wilmington).